Reading from the N-terminus, the 169-residue chain is Phosphopantetheine adenylyltransferase (169 aa).

Thr-13 is a substrate binding site. ATP-binding positions include 13-14 and His-21; that span reads TF. Substrate is bound by residues Lys-45, Leu-82, and Arg-96. ATP contacts are provided by residues 97–99, Glu-107, and 132–138; these read GLR and HQFISSR.

The protein belongs to the bacterial CoaD family. In terms of assembly, homohexamer. The cofactor is Mg(2+).

The protein localises to the cytoplasm. The catalysed reaction is (R)-4'-phosphopantetheine + ATP + H(+) = 3'-dephospho-CoA + diphosphate. The protein operates within cofactor biosynthesis; coenzyme A biosynthesis; CoA from (R)-pantothenate: step 4/5. In terms of biological role, reversibly transfers an adenylyl group from ATP to 4'-phosphopantetheine, yielding dephospho-CoA (dPCoA) and pyrophosphate. The protein is Phosphopantetheine adenylyltransferase of Acidiphilium cryptum (strain JF-5).